The sequence spans 312 residues: uncharacterized protein (312 aa).

2 consecutive transmembrane segments (helical) span residues 4 to 24 (AIYLLILCIFGLFSVYFTYAE) and 286 to 306 (YLLSFIGIIIGFGIIGLAIYL).

It localises to the cell membrane. This is an uncharacterized protein from Methanocaldococcus jannaschii (strain ATCC 43067 / DSM 2661 / JAL-1 / JCM 10045 / NBRC 100440) (Methanococcus jannaschii).